Here is a 122-residue protein sequence, read N- to C-terminus: uncharacterized protein (122 aa).

The next 3 helical transmembrane spans lie at 33 to 53 (ALGLLAAAVALVQLVPELTIP), 58 to 78 (VLGVVLAILAILTSGMGLLRW), and 97 to 117 (PGYLAVGLCVVGVVALALVVA).

It to E.coli YidH.

The protein resides in the cell membrane. This is an uncharacterized protein from Mycobacterium tuberculosis (strain CDC 1551 / Oshkosh).